The chain runs to 189 residues: Protein jagunal homolog (189 aa).

Over 1 to 34 (MSSRGVRAAGTDGTDFQNRQRVAQHYQESAQYKS) the chain is Cytoplasmic. Residues 35–55 (ILKWFFVPHFLILVFMWLKVG) form a helical membrane-spanning segment. Topologically, residues 56–78 (SELLRTNFGWKNAFFDRLDMPSA) are lumenal. Residues 79–99 (YPWEYVWCFSFIPIVLAIYSF) traverse the membrane as a helical segment. The Cytoplasmic segment spans residues 100–105 (QRNKLK). The helical transmembrane segment at 106-126 (ILHYAYYAEFVVGIFPCMIGL) threads the bilayer. Topologically, residues 127–150 (GGQLPELMEYAQDMEGSNTPTFKG) are lumenal. A helical membrane pass occupies residues 151 to 171 (IFPMVIIWYIFFAVALQIHGF). The Cytoplasmic portion of the chain corresponds to 172 to 189 (SMYFMHHLAAAWAPVKRD).

Belongs to the jagunal family.

The protein resides in the endoplasmic reticulum membrane. The polypeptide is Protein jagunal homolog (Caenorhabditis elegans).